A 307-amino-acid chain; its full sequence is HPr kinase/phosphorylase (307 aa).

Active-site residues include His-136 and Lys-157. An ATP-binding site is contributed by 151–158; it reads GESGIGKS. Ser-158 serves as a coordination point for Mg(2+). Catalysis depends on Asp-175, which acts as the Proton acceptor; for phosphorylation activity. Proton donor; for dephosphorylation activity. Residues 198–207 are important for the catalytic mechanism of both phosphorylation and dephosphorylation; sequence LEVRGMGIID. Mg(2+) is bound at residue Glu-199. Arg-240 is an active-site residue. Positions 261 to 266 are important for the catalytic mechanism of dephosphorylation; it reads PIRPGR.

It belongs to the HPrK/P family. Homohexamer. Mg(2+) is required as a cofactor.

The enzyme catalyses [HPr protein]-L-serine + ATP = [HPr protein]-O-phospho-L-serine + ADP + H(+). The catalysed reaction is [HPr protein]-O-phospho-L-serine + phosphate + H(+) = [HPr protein]-L-serine + diphosphate. Catalyzes the ATP- as well as the pyrophosphate-dependent phosphorylation of a specific serine residue in HPr, a phosphocarrier protein of the phosphoenolpyruvate-dependent sugar phosphotransferase system (PTS). HprK/P also catalyzes the pyrophosphate-producing, inorganic phosphate-dependent dephosphorylation (phosphorolysis) of seryl-phosphorylated HPr (P-Ser-HPr). The two antagonistic activities of HprK/P are regulated by several intracellular metabolites, which change their concentration in response to the absence or presence of rapidly metabolisable carbon sources (glucose, fructose, etc.) in the growth medium. Therefore, by controlling the phosphorylation state of HPr, HPrK/P is a sensor enzyme that plays a major role in the regulation of carbon metabolism and sugar transport: it mediates carbon catabolite repression (CCR), and regulates PTS-catalyzed carbohydrate uptake and inducer exclusion. This Clostridium novyi (strain NT) protein is HPr kinase/phosphorylase.